Here is a 356-residue protein sequence, read N- to C-terminus: Histidinol-phosphate aminotransferase (356 aa).

An N6-(pyridoxal phosphate)lysine modification is found at lysine 217.

This sequence belongs to the class-II pyridoxal-phosphate-dependent aminotransferase family. Histidinol-phosphate aminotransferase subfamily. In terms of assembly, homodimer. Pyridoxal 5'-phosphate serves as cofactor.

It carries out the reaction L-histidinol phosphate + 2-oxoglutarate = 3-(imidazol-4-yl)-2-oxopropyl phosphate + L-glutamate. It participates in amino-acid biosynthesis; L-histidine biosynthesis; L-histidine from 5-phospho-alpha-D-ribose 1-diphosphate: step 7/9. The sequence is that of Histidinol-phosphate aminotransferase from Chromobacterium violaceum (strain ATCC 12472 / DSM 30191 / JCM 1249 / CCUG 213 / NBRC 12614 / NCIMB 9131 / NCTC 9757 / MK).